A 189-amino-acid chain; its full sequence is Protein C1orf43 homolog (189 aa).

A helical membrane pass occupies residues 11-31; that stretch reads VNVVLVMAYGSLVFVLLFIFV.

The protein localises to the membrane. The protein resides in the golgi apparatus. Its subcellular location is the mitochondrion. Its function is as follows. General regulator of phagocytosis. Required to uptake Gram negative bacterium by macrophages. The polypeptide is Protein C1orf43 homolog (Pongo abelii (Sumatran orangutan)).